A 137-amino-acid chain; its full sequence is MTMETLPKVLEVDEKSPEAKDLLPSQTASSLCISSRSESVWTTTPRSNWEIYRKPIVIMSVGGAILLFGVVITCLAYTLKLSDKSLSILKMVGPGFLSLGLMMLVCGLVWVPIIKKKQKHRQKSNFLRSLKSFFLTR.

2 consecutive transmembrane segments (helical) span residues 56 to 76 and 94 to 114; these read IVIM…TCLA and PGFL…VPII.

In terms of assembly, interacts with TRPV1.

It is found in the membrane. Its function is as follows. Regulatory subunit of TRPV1, a molecular sensor of noxious heat and capsaicin. Positively regulates TRPV1 channel activity via phosphatidylinositol 4,5-bisphosphate (PIP2). Binds various phosphoinositide, including phosphatidylinositol 4,5-bisphosphate (PIP2), but not phosphatidylinositol (PI). The polypeptide is Phosphoinositide-interacting protein (PIRT) (Homo sapiens (Human)).